The primary structure comprises 128 residues: Large ribosomal subunit protein uL22 (128 aa).

The protein belongs to the universal ribosomal protein uL22 family. As to quaternary structure, part of the 50S ribosomal subunit.

Functionally, this protein binds specifically to 23S rRNA; its binding is stimulated by other ribosomal proteins, e.g. L4, L17, and L20. It is important during the early stages of 50S assembly. It makes multiple contacts with different domains of the 23S rRNA in the assembled 50S subunit and ribosome. Its function is as follows. The globular domain of the protein is located near the polypeptide exit tunnel on the outside of the subunit, while an extended beta-hairpin is found that lines the wall of the exit tunnel in the center of the 70S ribosome. In Rhodopseudomonas palustris (strain HaA2), this protein is Large ribosomal subunit protein uL22.